Here is a 430-residue protein sequence, read N- to C-terminus: Lipoyl synthase, mitochondrial (430 aa).

Residues 1–29 (MASPVPIQRLQAPLRRSLARAAALSTRSY) constitute a mitochondrion transit peptide. The segment covering 28-58 (SYATIPSGPSSQPTSQESSSAASASAPATKP) has biased composition (low complexity). A disordered region spans residues 28 to 62 (SYATIPSGPSSQPTSQESSSAASASAPATKPRPTY). Cysteine 142, cysteine 147, cysteine 153, cysteine 173, cysteine 177, cysteine 180, and serine 390 together coordinate [4Fe-4S] cluster. A Radical SAM core domain is found at 156–379 (GSNKAAATAT…RQRALDMGFL (224 aa)).

Belongs to the radical SAM superfamily. Lipoyl synthase family. It depends on [4Fe-4S] cluster as a cofactor.

The protein localises to the mitochondrion. It carries out the reaction [[Fe-S] cluster scaffold protein carrying a second [4Fe-4S](2+) cluster] + N(6)-octanoyl-L-lysyl-[protein] + 2 oxidized [2Fe-2S]-[ferredoxin] + 2 S-adenosyl-L-methionine + 4 H(+) = [[Fe-S] cluster scaffold protein] + N(6)-[(R)-dihydrolipoyl]-L-lysyl-[protein] + 4 Fe(3+) + 2 hydrogen sulfide + 2 5'-deoxyadenosine + 2 L-methionine + 2 reduced [2Fe-2S]-[ferredoxin]. The protein operates within protein modification; protein lipoylation via endogenous pathway; protein N(6)-(lipoyl)lysine from octanoyl-[acyl-carrier-protein]: step 2/2. Functionally, catalyzes the radical-mediated insertion of two sulfur atoms into the C-6 and C-8 positions of the octanoyl moiety bound to the lipoyl domains of lipoate-dependent enzymes, thereby converting the octanoylated domains into lipoylated derivatives. This Neurospora crassa (strain ATCC 24698 / 74-OR23-1A / CBS 708.71 / DSM 1257 / FGSC 987) protein is Lipoyl synthase, mitochondrial.